Consider the following 89-residue polypeptide: Small ribosomal subunit protein uS15 (89 aa).

The protein belongs to the universal ribosomal protein uS15 family. As to quaternary structure, part of the 30S ribosomal subunit. Forms a bridge to the 50S subunit in the 70S ribosome, contacting the 23S rRNA.

In terms of biological role, one of the primary rRNA binding proteins, it binds directly to 16S rRNA where it helps nucleate assembly of the platform of the 30S subunit by binding and bridging several RNA helices of the 16S rRNA. Forms an intersubunit bridge (bridge B4) with the 23S rRNA of the 50S subunit in the ribosome. This Acinetobacter baumannii (strain AB307-0294) protein is Small ribosomal subunit protein uS15.